The following is a 391-amino-acid chain: Phosphoglycerate kinase (391 aa).

Residues 21-23, arginine 36, 59-62, arginine 113, and arginine 146 each bind substrate; these read DLN and HLGR. ATP is bound by residues lysine 197, glutamate 319, and 345–348; that span reads GGDT.

The protein belongs to the phosphoglycerate kinase family. Monomer.

It is found in the cytoplasm. The catalysed reaction is (2R)-3-phosphoglycerate + ATP = (2R)-3-phospho-glyceroyl phosphate + ADP. It functions in the pathway carbohydrate degradation; glycolysis; pyruvate from D-glyceraldehyde 3-phosphate: step 2/5. In Xanthomonas campestris pv. campestris (strain 8004), this protein is Phosphoglycerate kinase.